A 321-amino-acid chain; its full sequence is Lipoyl synthase (321 aa).

The [4Fe-4S] cluster site is built by cysteine 68, cysteine 73, cysteine 79, cysteine 94, cysteine 98, cysteine 101, and serine 308. The Radical SAM core domain maps to 80–297 (FNHGTATFMI…KAEAMAMGFT (218 aa)).

This sequence belongs to the radical SAM superfamily. Lipoyl synthase family. Requires [4Fe-4S] cluster as cofactor.

It localises to the cytoplasm. The catalysed reaction is [[Fe-S] cluster scaffold protein carrying a second [4Fe-4S](2+) cluster] + N(6)-octanoyl-L-lysyl-[protein] + 2 oxidized [2Fe-2S]-[ferredoxin] + 2 S-adenosyl-L-methionine + 4 H(+) = [[Fe-S] cluster scaffold protein] + N(6)-[(R)-dihydrolipoyl]-L-lysyl-[protein] + 4 Fe(3+) + 2 hydrogen sulfide + 2 5'-deoxyadenosine + 2 L-methionine + 2 reduced [2Fe-2S]-[ferredoxin]. It functions in the pathway protein modification; protein lipoylation via endogenous pathway; protein N(6)-(lipoyl)lysine from octanoyl-[acyl-carrier-protein]: step 2/2. In terms of biological role, catalyzes the radical-mediated insertion of two sulfur atoms into the C-6 and C-8 positions of the octanoyl moiety bound to the lipoyl domains of lipoate-dependent enzymes, thereby converting the octanoylated domains into lipoylated derivatives. This is Lipoyl synthase from Enterobacter sp. (strain 638).